Reading from the N-terminus, the 168-residue chain is Peptidyl-Lys metalloendopeptidase (168 aa).

Cystine bridges form between Cys-6/Cys-76 and Cys-78/Cys-98. His-118 serves as a coordination point for Zn(2+). Residue Glu-119 is part of the active site. Residues His-122 and Asp-131 each coordinate Zn(2+).

Requires Zn(2+) as cofactor.

Its subcellular location is the secreted. The catalysed reaction is Preferential cleavage in proteins: -Xaa-|-Lys- (in which Xaa may be Pro).. Its activity is regulated as follows. Inhibited by chelating agents such as EDTA and 1,10-phenanthroline. The polypeptide is Peptidyl-Lys metalloendopeptidase (MEP) (Pleurotus ostreatus (Oyster mushroom)).